The chain runs to 162 residues: SsrA-binding protein (162 aa).

Belongs to the SmpB family.

Its subcellular location is the cytoplasm. Its function is as follows. Required for rescue of stalled ribosomes mediated by trans-translation. Binds to transfer-messenger RNA (tmRNA), required for stable association of tmRNA with ribosomes. tmRNA and SmpB together mimic tRNA shape, replacing the anticodon stem-loop with SmpB. tmRNA is encoded by the ssrA gene; the 2 termini fold to resemble tRNA(Ala) and it encodes a 'tag peptide', a short internal open reading frame. During trans-translation Ala-aminoacylated tmRNA acts like a tRNA, entering the A-site of stalled ribosomes, displacing the stalled mRNA. The ribosome then switches to translate the ORF on the tmRNA; the nascent peptide is terminated with the 'tag peptide' encoded by the tmRNA and targeted for degradation. The ribosome is freed to recommence translation, which seems to be the essential function of trans-translation. This chain is SsrA-binding protein, found in Granulibacter bethesdensis (strain ATCC BAA-1260 / CGDNIH1).